The primary structure comprises 245 residues: Probable phosphatase ECA2529 (245 aa).

Residues His7, His9, His15, His40, Glu73, His101, His131, Asp192, and His194 each contribute to the Zn(2+) site.

This sequence belongs to the PHP family. In terms of assembly, homotrimer. Requires Zn(2+) as cofactor.

This is Probable phosphatase ECA2529 from Pectobacterium atrosepticum (strain SCRI 1043 / ATCC BAA-672) (Erwinia carotovora subsp. atroseptica).